The following is a 55-amino-acid chain: Large ribosomal subunit protein bL33 (55 aa).

This sequence belongs to the bacterial ribosomal protein bL33 family.

In Dehalococcoides mccartyi (strain ATCC BAA-2266 / KCTC 15142 / 195) (Dehalococcoides ethenogenes (strain 195)), this protein is Large ribosomal subunit protein bL33.